We begin with the raw amino-acid sequence, 963 residues long: Integrator complex subunit 4 (963 aa).

Lys-26 carries the N6-acetyllysine modification. 8 HEAT repeats span residues 66–105 (AESVEGVVRILLEHYYKENDPSVRLKIASLLGLLSKTAGF), 145–183 (QAIQMRLVDVACKHLTDTSHGVRNKCLQLLGNLGSLEKS), 190–228 (GLAARDVQKIIGDYFSDQDPRVRTAAIKAMLQLHERGLK), 229–263 (LHQTIYNQACKLLSDDYEQVRSAAVQLIWVVSQLY), 277–313 (IRLVDDAFGKICHMVSDGSWVVRVQAAKLLGSMEQVS), 369–405 (NLIESGACGAFVHGLEDEMYEVRIAAVEALCMLAQSS), 406–444 (PSFAEKCLDFLVDMFNDEIEEVRLQSIHTMRKISNNITL), and 446–484 (EDQLDTVLAVLEDSSRDIREALHELLCCTNVSTKEGIHL). Lys-791 participates in a covalent cross-link: Glycyl lysine isopeptide (Lys-Gly) (interchain with G-Cter in SUMO1); alternate. Lys-791 participates in a covalent cross-link: Glycyl lysine isopeptide (Lys-Gly) (interchain with G-Cter in SUMO2); alternate.

Belongs to the Integrator subunit 4 family. In terms of assembly, component of the Integrator complex, composed of core subunits INTS1, INTS2, INTS3, INTS4, INTS5, INTS6, INTS7, INTS8, INTS9/RC74, INTS10, INTS11/CPSF3L, INTS12, INTS13, INTS14 and INTS15. The core complex associates with protein phosphatase 2A subunits PPP2CA and PPP2R1A, to form the Integrator-PP2A (INTAC) complex. INTS4 is part of the RNA endonuclease subcomplex, composed of INTS4, INTS9, INTS11 and inositol hexakisphosphate (InsP6). Interacts with BRAT1; interaction is required for the assembly of the RNA endonuclease subcomplex.

The protein localises to the nucleus. The protein resides in the cytoplasm. In terms of biological role, component of the integrator complex, a multiprotein complex that terminates RNA polymerase II (Pol II) transcription in the promoter-proximal region of genes. The integrator complex provides a quality checkpoint during transcription elongation by driving premature transcription termination of transcripts that are unfavorably configured for transcriptional elongation: the complex terminates transcription by (1) catalyzing dephosphorylation of the C-terminal domain (CTD) of Pol II subunit POLR2A/RPB1 and SUPT5H/SPT5, (2) degrading the exiting nascent RNA transcript via endonuclease activity and (3) promoting the release of Pol II from bound DNA. The integrator complex is also involved in terminating the synthesis of non-coding Pol II transcripts, such as enhancer RNAs (eRNAs), small nuclear RNAs (snRNAs), telomerase RNAs and long non-coding RNAs (lncRNAs). Within the integrator complex, INTS4 acts as an scaffold that links INTS9 and INTS11. Mediates recruitment of cytoplasmic dynein to the nuclear envelope, probably as component of the integrator complex. The polypeptide is Integrator complex subunit 4 (Homo sapiens (Human)).